The chain runs to 128 residues: Transcription antitermination protein NusB (128 aa).

Belongs to the NusB family.

Involved in transcription antitermination. Required for transcription of ribosomal RNA (rRNA) genes. Binds specifically to the boxA antiterminator sequence of the ribosomal RNA (rrn) operons. In Listeria monocytogenes serotype 4b (strain CLIP80459), this protein is Transcription antitermination protein NusB.